Here is a 466-residue protein sequence, read N- to C-terminus: Uronate isomerase (466 aa).

This sequence belongs to the metallo-dependent hydrolases superfamily. Uronate isomerase family.

It carries out the reaction D-glucuronate = D-fructuronate. It catalyses the reaction aldehydo-D-galacturonate = keto-D-tagaturonate. It participates in carbohydrate metabolism; pentose and glucuronate interconversion. The polypeptide is Uronate isomerase (uxaC) (Brucella melitensis biotype 1 (strain ATCC 23456 / CCUG 17765 / NCTC 10094 / 16M)).